The following is a 350-amino-acid chain: WUSCHEL-related homeobox 1 (350 aa).

The segment at residues methionine 72–arginine 136 is a DNA-binding region (homeobox; WUS-type). The segment at threonine 283–glutamate 308 is disordered.

It belongs to the WUS homeobox family.

It localises to the nucleus. Functionally, transcription factor which may be involved in developmental processes. The protein is WUSCHEL-related homeobox 1 (WOX1) of Arabidopsis thaliana (Mouse-ear cress).